The sequence spans 160 residues: Cyclic pyranopterin monophosphate synthase (160 aa).

Residues 75-77 (LCH) and 113-114 (ME) each bind substrate. The active site involves aspartate 128.

This sequence belongs to the MoaC family. In terms of assembly, homohexamer; trimer of dimers.

It carries out the reaction (8S)-3',8-cyclo-7,8-dihydroguanosine 5'-triphosphate = cyclic pyranopterin phosphate + diphosphate. The protein operates within cofactor biosynthesis; molybdopterin biosynthesis. In terms of biological role, catalyzes the conversion of (8S)-3',8-cyclo-7,8-dihydroguanosine 5'-triphosphate to cyclic pyranopterin monophosphate (cPMP). The sequence is that of Cyclic pyranopterin monophosphate synthase from Sodalis glossinidius (strain morsitans).